The sequence spans 360 residues: DNA replication and repair protein RecF (360 aa).

30–37 is a binding site for ATP; sequence GQNGSGKT.

It belongs to the RecF family.

The protein resides in the cytoplasm. Its function is as follows. The RecF protein is involved in DNA metabolism; it is required for DNA replication and normal SOS inducibility. RecF binds preferentially to single-stranded, linear DNA. It also seems to bind ATP. The sequence is that of DNA replication and repair protein RecF from Shewanella sp. (strain MR-7).